A 438-amino-acid chain; its full sequence is (S)-3,5-dihydroxyphenylglycine transaminase (438 aa).

Lys266 is subject to N6-(pyridoxal phosphate)lysine.

It belongs to the class-I pyridoxal-phosphate-dependent aminotransferase family. The cofactor is pyridoxal 5'-phosphate.

The enzyme catalyses (S)-3,5-dihydroxyphenylglycine + 2-oxoglutarate = 2-(3,5-dihydroxyphenyl)-2-oxoacetate + L-glutamate. It participates in antibiotic biosynthesis; vancomycin biosynthesis. Functionally, catalyzes the transamination of p-hydroxybenzoylformate to L-p-hydroxyphenylglycine as part of the biosynthesis of the (S)-3,5-dihydroxyphenylglycine constituent of the glycopeptide antibiotic chloroeremomycin, a member of the vancomycin group of antibiotics. This chain is (S)-3,5-dihydroxyphenylglycine transaminase (hpgT), found in Amycolatopsis orientalis (Nocardia orientalis).